The chain runs to 883 residues: Alanine--tRNA ligase (883 aa).

Residues histidine 562, histidine 566, cysteine 664, and histidine 668 each coordinate Zn(2+).

This sequence belongs to the class-II aminoacyl-tRNA synthetase family. In terms of assembly, homotetramer. Requires Zn(2+) as cofactor.

The protein resides in the cytoplasm. It catalyses the reaction tRNA(Ala) + L-alanine + ATP = L-alanyl-tRNA(Ala) + AMP + diphosphate. Its function is as follows. Catalyzes the attachment of alanine to tRNA(Ala) in a two-step reaction: alanine is first activated by ATP to form Ala-AMP and then transferred to the acceptor end of tRNA(Ala). Also edits incorrectly charged Ser-tRNA(Ala) and Gly-tRNA(Ala) via its editing domain. The polypeptide is Alanine--tRNA ligase (Buchnera aphidicola subsp. Schizaphis graminum (strain Sg)).